A 158-amino-acid polypeptide reads, in one-letter code: Acetolactate synthase small subunit (158 aa).

Positions 4-79 (MIIAKLHNVT…DVIEVADITD (76 aa)) constitute an ACT domain.

It belongs to the acetolactate synthase small subunit family. In terms of assembly, dimer of large and small chains.

The enzyme catalyses 2 pyruvate + H(+) = (2S)-2-acetolactate + CO2. Its pathway is amino-acid biosynthesis; L-isoleucine biosynthesis; L-isoleucine from 2-oxobutanoate: step 1/4. The protein operates within amino-acid biosynthesis; L-valine biosynthesis; L-valine from pyruvate: step 1/4. This is Acetolactate synthase small subunit (ilvH) from Lactococcus lactis subsp. lactis (strain IL1403) (Streptococcus lactis).